The chain runs to 100 residues: Small ribosomal subunit protein uS14 (100 aa).

It belongs to the universal ribosomal protein uS14 family. Part of the 30S ribosomal subunit. Contacts proteins S3 and S10.

In terms of biological role, binds 16S rRNA, required for the assembly of 30S particles and may also be responsible for determining the conformation of the 16S rRNA at the A site. This Prochlorococcus marinus (strain MIT 9303) protein is Small ribosomal subunit protein uS14.